The following is a 303-amino-acid chain: Glycine--tRNA ligase alpha subunit (303 aa).

Belongs to the class-II aminoacyl-tRNA synthetase family. Tetramer of two alpha and two beta subunits.

The protein resides in the cytoplasm. The catalysed reaction is tRNA(Gly) + glycine + ATP = glycyl-tRNA(Gly) + AMP + diphosphate. The sequence is that of Glycine--tRNA ligase alpha subunit from Salmonella paratyphi A (strain ATCC 9150 / SARB42).